The sequence spans 377 residues: Required for respiratory growth protein 1, mitochondrial (377 aa).

Belongs to the RRG1 family.

It is found in the mitochondrion. In terms of biological role, essential for respiratory growth and required for mitochondrial protein synthesis. Required for vacuolar acidification. This Candida glabrata (strain ATCC 2001 / BCRC 20586 / JCM 3761 / NBRC 0622 / NRRL Y-65 / CBS 138) (Yeast) protein is Required for respiratory growth protein 1, mitochondrial (RRG1).